The primary structure comprises 94 residues: Small ribosomal subunit protein uS19 (94 aa).

This sequence belongs to the universal ribosomal protein uS19 family.

Functionally, protein S19 forms a complex with S13 that binds strongly to the 16S ribosomal RNA. This is Small ribosomal subunit protein uS19 from Natranaerobius thermophilus (strain ATCC BAA-1301 / DSM 18059 / JW/NM-WN-LF).